Reading from the N-terminus, the 197-residue chain is Protein GrpE (197 aa).

The disordered stretch occupies residues methionine 1 to glutamate 43.

This sequence belongs to the GrpE family. In terms of assembly, homodimer.

The protein localises to the cytoplasm. Functionally, participates actively in the response to hyperosmotic and heat shock by preventing the aggregation of stress-denatured proteins, in association with DnaK and GrpE. It is the nucleotide exchange factor for DnaK and may function as a thermosensor. Unfolded proteins bind initially to DnaJ; upon interaction with the DnaJ-bound protein, DnaK hydrolyzes its bound ATP, resulting in the formation of a stable complex. GrpE releases ADP from DnaK; ATP binding to DnaK triggers the release of the substrate protein, thus completing the reaction cycle. Several rounds of ATP-dependent interactions between DnaJ, DnaK and GrpE are required for fully efficient folding. This Cronobacter sakazakii (strain ATCC BAA-894) (Enterobacter sakazakii) protein is Protein GrpE.